A 230-amino-acid chain; its full sequence is Endonuclease NucS (230 aa).

Belongs to the NucS endonuclease family.

The protein resides in the cytoplasm. Its function is as follows. Cleaves both 3' and 5' ssDNA extremities of branched DNA structures. This is Endonuclease NucS from Corynebacterium aurimucosum (strain ATCC 700975 / DSM 44827 / CIP 107346 / CN-1) (Corynebacterium nigricans).